The following is a 244-amino-acid chain: Lectin (244 aa).

The segment at 1-20 (TETETTSFSIPKTDQPSSPK) is disordered.

The protein belongs to the leguminous lectin family. As to quaternary structure, homodimer. In contrast to other Lathyrus lectins which are tetramer of two alpha and two beta chains.

The protein is Lectin of Lathyrus sphaericus (Spring vetchling).